The chain runs to 386 residues: Probable serine/threonine-protein kinase PBL23 (386 aa).

A lipid anchor (S-palmitoyl cysteine) is attached at Cys-5. Residues 82–360 enclose the Protein kinase domain; that stretch reads FNPDNQLGEG…SDVVTALEYL (279 aa). ATP-binding positions include 88-96 and Lys-111; that span reads LGEGGFGRV. Asp-210 (proton acceptor) is an active-site residue. The segment at 365–386 is disordered; that stretch reads TEEDGQTVEGEEEEEEDERSKL. Over residues 368–386 the composition is skewed to acidic residues; it reads DGQTVEGEEEEEEDERSKL.

This sequence belongs to the protein kinase superfamily. Ser/Thr protein kinase family.

Its subcellular location is the cell membrane. The catalysed reaction is L-seryl-[protein] + ATP = O-phospho-L-seryl-[protein] + ADP + H(+). It carries out the reaction L-threonyl-[protein] + ATP = O-phospho-L-threonyl-[protein] + ADP + H(+). May be involved in plant defense signaling. The polypeptide is Probable serine/threonine-protein kinase PBL23 (Arabidopsis thaliana (Mouse-ear cress)).